Here is a 153-residue protein sequence, read N- to C-terminus: Movement protein (153 aa).

2 disordered regions span residues 1 to 24 (MAQE…EQDP) and 107 to 153 (ALSL…RNQR). 2 stretches are compositionally biased toward polar residues: residues 109 to 122 (SLLS…NQPW) and 140 to 153 (GQRQ…RNQR).

It belongs to the luteoviruses movement protein family.

It is found in the host nucleus envelope. In terms of biological role, transports viral genome to neighboring plant cells directly through plasmosdesmata, without any budding. The movement protein allows efficient cell to cell propagation, by bypassing the host cell wall barrier. Acts as a suppressor of RNA-mediated gene silencing, also known as post-transcriptional gene silencing (PTGS), a mechanism of plant viral defense that limits the accumulation of viral RNAs. In Avena byzantina (Oat), this protein is Movement protein.